Reading from the N-terminus, the 418-residue chain is MSATLFNNIELLPPDALFGIKQRYGQDQRATKVDLGIGAYRDDNGKPWVLPSVKAAEKLIHNDSSYNHEYLGITGLPSLTSNAAKIIFGTQSDAFQEDRVISVQSLSGTGALHISAKFFSKFFPDKLVYLSKPTWANHMAIFENQGLKTATYPYWANETKSLDLNGFLNAIQKAPEGSIFVLHSCAHNPTGLDPTSEQWVQIVDAIASKNHIALFDTAYQGFATGDLDKDAYAVRLGVEKLSTVSPVFVCQSFAKNAGMYGERVGCFHLALTKQAQNKTIKPAVTSQLAKIIRSEVSNPPAYGAKIVAKLLETPELTEQWHKDMVTMSSRITKMRHALRDHLVKLGTPGNWDHIVNQCGMFSFTGLTPQMVKRLEETHAVYLVASGRASIAGLNQGNVEYVAKAIDEVVRFYTIEAKL.

Serine 2 is subject to N-acetylserine. L-aspartate-binding residues include glycine 38, tryptophan 135, and asparagine 188. Position 255 is an N6-(pyridoxal phosphate)lysine (lysine 255). Arginine 387 contributes to the L-aspartate binding site. Phosphoserine is present on serine 389.

Belongs to the class-I pyridoxal-phosphate-dependent aminotransferase family. In terms of assembly, homodimer. It depends on pyridoxal 5'-phosphate as a cofactor.

Its subcellular location is the cytoplasm. The protein localises to the peroxisome. It carries out the reaction L-aspartate + 2-oxoglutarate = oxaloacetate + L-glutamate. Its function is as follows. Plays a key role in amino acid metabolism. This is Aspartate aminotransferase, cytoplasmic (AAT2) from Saccharomyces cerevisiae (strain ATCC 204508 / S288c) (Baker's yeast).